The primary structure comprises 159 residues: Small ribosomal subunit protein uS9 (159 aa).

It belongs to the universal ribosomal protein uS9 family.

The polypeptide is Small ribosomal subunit protein uS9 (Beijerinckia indica subsp. indica (strain ATCC 9039 / DSM 1715 / NCIMB 8712)).